Consider the following 528-residue polypeptide: Glutamate--cysteine ligase (528 aa).

This sequence belongs to the glutamate--cysteine ligase type 1 family. Type 1 subfamily.

It carries out the reaction L-cysteine + L-glutamate + ATP = gamma-L-glutamyl-L-cysteine + ADP + phosphate + H(+). It functions in the pathway sulfur metabolism; glutathione biosynthesis; glutathione from L-cysteine and L-glutamate: step 1/2. This is Glutamate--cysteine ligase from Janthinobacterium sp. (strain Marseille) (Minibacterium massiliensis).